The sequence spans 640 residues: Chaperone protein HtpG (640 aa).

The segment at 1–348 (MADVAHQETH…SNDLPLNVSR (348 aa)) is a; substrate-binding. The b stretch occupies residues 349-565 (EILQDNKITQ…GTGMSTQMIK (217 aa)). The segment at 566–640 (LMQAAGQPVP…LNTLLMNLAK (75 aa)) is c.

This sequence belongs to the heat shock protein 90 family. In terms of assembly, homodimer.

The protein localises to the cytoplasm. Functionally, molecular chaperone. Has ATPase activity. The chain is Chaperone protein HtpG from Pseudoalteromonas atlantica (strain T6c / ATCC BAA-1087).